The primary structure comprises 179 residues: Transcription factor BOA15 (179 aa).

It localises to the nucleus. Transcription factor that probably coregulates the gene clusters that mediates the biosynthesis of botcinin acid and its botcinin derivatives, acetate-derived polyketides that contribute to virulence when combined with the sesquiterpene botrydial. Botcinin acid and its derivatives have been shown to induce chlorosis and necrosis during host plant infection, but also have antifungal activities. This chain is Transcription factor BOA15, found in Botryotinia fuckeliana (strain B05.10) (Noble rot fungus).